The chain runs to 218 residues: Glutathione S-transferase Mu 5 (218 aa).

A GST N-terminal domain is found at 2 to 88 (PMTLGYWDIR…YIARKHNLCG (87 aa)). Residues 7–8 (YW), 46–50 (WLNEK), 59–60 (NL), and 72–73 (QS) each bind glutathione. Residues 90-207 (TEEEKIRVDI…MKSSQFLRGL (118 aa)) enclose the GST C-terminal domain. Residue Tyr-116 participates in substrate binding.

It belongs to the GST superfamily. Mu family. As to quaternary structure, homodimer.

The protein resides in the cytoplasm. The enzyme catalyses RX + glutathione = an S-substituted glutathione + a halide anion + H(+). In terms of biological role, conjugation of reduced glutathione to a wide number of exogenous and endogenous hydrophobic electrophiles. The sequence is that of Glutathione S-transferase Mu 5 (GSTM5) from Homo sapiens (Human).